The following is a 251-amino-acid chain: 4-hydroxy-tetrahydrodipicolinate reductase (251 aa).

Residue 8–13 (GALGRM) coordinates NAD(+). Arg36 lines the NADP(+) pocket. NAD(+)-binding positions include 89 to 91 (GTT) and 113 to 116 (TTNF). His145 serves as the catalytic Proton donor/acceptor. His146 is a binding site for (S)-2,3,4,5-tetrahydrodipicolinate. Lys149 acts as the Proton donor in catalysis. 155-156 (GT) is a binding site for (S)-2,3,4,5-tetrahydrodipicolinate.

Belongs to the DapB family.

The protein localises to the cytoplasm. The enzyme catalyses (S)-2,3,4,5-tetrahydrodipicolinate + NAD(+) + H2O = (2S,4S)-4-hydroxy-2,3,4,5-tetrahydrodipicolinate + NADH + H(+). It carries out the reaction (S)-2,3,4,5-tetrahydrodipicolinate + NADP(+) + H2O = (2S,4S)-4-hydroxy-2,3,4,5-tetrahydrodipicolinate + NADPH + H(+). It participates in amino-acid biosynthesis; L-lysine biosynthesis via DAP pathway; (S)-tetrahydrodipicolinate from L-aspartate: step 4/4. In terms of biological role, catalyzes the conversion of 4-hydroxy-tetrahydrodipicolinate (HTPA) to tetrahydrodipicolinate. The protein is 4-hydroxy-tetrahydrodipicolinate reductase of Methanocorpusculum labreanum (strain ATCC 43576 / DSM 4855 / Z).